Reading from the N-terminus, the 249-residue chain is 1-(5-phosphoribosyl)-5-[(5-phosphoribosylamino)methylideneamino] imidazole-4-carboxamide isomerase (249 aa).

Aspartate 10 (proton acceptor) is an active-site residue. The active-site Proton donor is aspartate 131.

This sequence belongs to the HisA/HisF family.

The protein localises to the cytoplasm. It catalyses the reaction 1-(5-phospho-beta-D-ribosyl)-5-[(5-phospho-beta-D-ribosylamino)methylideneamino]imidazole-4-carboxamide = 5-[(5-phospho-1-deoxy-D-ribulos-1-ylimino)methylamino]-1-(5-phospho-beta-D-ribosyl)imidazole-4-carboxamide. The protein operates within amino-acid biosynthesis; L-histidine biosynthesis; L-histidine from 5-phospho-alpha-D-ribose 1-diphosphate: step 4/9. This Brevibacillus brevis (strain 47 / JCM 6285 / NBRC 100599) protein is 1-(5-phosphoribosyl)-5-[(5-phosphoribosylamino)methylideneamino] imidazole-4-carboxamide isomerase.